We begin with the raw amino-acid sequence, 186 residues long: Ribosome-recycling factor (186 aa).

Belongs to the RRF family.

It localises to the cytoplasm. Functionally, responsible for the release of ribosomes from messenger RNA at the termination of protein biosynthesis. May increase the efficiency of translation by recycling ribosomes from one round of translation to another. This chain is Ribosome-recycling factor, found in Bordetella avium (strain 197N).